The chain runs to 574 residues: Ankyrin repeat protein B18 (574 aa).

6 ANK repeats span residues 56-87, 135-164, 167-213, 217-249, 253-285, and 327-356; these read TGYTALHCYLYNNYFTNDVLKILLNHGVDVTM, IKSRYMLLKEEDIDENIVSTLLDKGIDPNF, DGYT…NLNA, CGNTPFHLYLSIEMCNNIHMTKMLLTFNPNFKI, HGLTPILCYITSDYIQHDILVMLIHHYETNVGE, and EGKTLLHVACEYNNTHVIDYLIRINGDINA. Residues 541 to 574 form the F-box domain; sequence NCLLTLLPSEIIYEILYMLTINDLYNISYPPTKV.

The polypeptide is Ankyrin repeat protein B18 (Vaccinia virus (strain Ankara) (VACV)).